The sequence spans 102 residues: Small ribosomal subunit protein uS10 (102 aa).

The protein belongs to the universal ribosomal protein uS10 family. In terms of assembly, part of the 30S ribosomal subunit.

Its function is as follows. Involved in the binding of tRNA to the ribosomes. This chain is Small ribosomal subunit protein uS10, found in Methanocorpusculum labreanum (strain ATCC 43576 / DSM 4855 / Z).